The chain runs to 152 residues: MLCPHCHHNGSRVIDSRPAEDGMSIRRRRECVNCGFRFTTFERYEETPLLVVKKDGTREEFNRQKILNGLVRSAEKRPVSMDKLTKIADHVEARVRRLGENEVSSQVIGEFVMNELKPVDEIAYIRFASVYRQFKDVDAFFKEIESMKKEER.

The segment at cysteine 3–cysteine 34 is a zinc-finger region. One can recognise an ATP-cone domain in the interval leucine 49–alanine 139.

Belongs to the NrdR family. The cofactor is Zn(2+).

Functionally, negatively regulates transcription of bacterial ribonucleotide reductase nrd genes and operons by binding to NrdR-boxes. This is Transcriptional repressor NrdR from Limosilactobacillus fermentum (strain NBRC 3956 / LMG 18251) (Lactobacillus fermentum).